The primary structure comprises 304 residues: N-acetylmuramic acid 6-phosphate etherase (304 aa).

Residues 58–221 form the SIS domain; sequence IAERIHRGGR…STGVMIKLGK (164 aa). Catalysis depends on glutamate 86, which acts as the Proton donor. Glutamate 117 is an active-site residue.

Belongs to the GCKR-like family. MurNAc-6-P etherase subfamily. Homodimer.

The catalysed reaction is N-acetyl-D-muramate 6-phosphate + H2O = N-acetyl-D-glucosamine 6-phosphate + (R)-lactate. It functions in the pathway amino-sugar metabolism; N-acetylmuramate degradation. Its function is as follows. Specifically catalyzes the cleavage of the D-lactyl ether substituent of MurNAc 6-phosphate, producing GlcNAc 6-phosphate and D-lactate. This is N-acetylmuramic acid 6-phosphate etherase from Clostridium beijerinckii (strain ATCC 51743 / NCIMB 8052) (Clostridium acetobutylicum).